Reading from the N-terminus, the 480-residue chain is Probable cytosol aminopeptidase (480 aa).

Lys248 and Asp253 together coordinate Mn(2+). The active site involves Lys260. 3 residues coordinate Mn(2+): Asp271, Asp330, and Glu332. Arg334 is an active-site residue.

Belongs to the peptidase M17 family. It depends on Mn(2+) as a cofactor.

The protein localises to the cytoplasm. The catalysed reaction is Release of an N-terminal amino acid, Xaa-|-Yaa-, in which Xaa is preferably Leu, but may be other amino acids including Pro although not Arg or Lys, and Yaa may be Pro. Amino acid amides and methyl esters are also readily hydrolyzed, but rates on arylamides are exceedingly low.. The enzyme catalyses Release of an N-terminal amino acid, preferentially leucine, but not glutamic or aspartic acids.. Its function is as follows. Presumably involved in the processing and regular turnover of intracellular proteins. Catalyzes the removal of unsubstituted N-terminal amino acids from various peptides. This Solibacter usitatus (strain Ellin6076) protein is Probable cytosol aminopeptidase.